The primary structure comprises 185 residues: MVSSFRVQQAAREIRAGAVIAYPTEAVWGLGCDPWNEDAVYRLLALKSRPVDKGLILIADNIRQFDFLFEDFPEDWIDRMGSTWPGPNTWLVPHQDLLPEWVTGQHDTVALRVSDHPVVRELCALVGPLISTSCNPGGRPAAKTRLRVEQYFHGQLDLVLGGALGGRKNPSVIRNLATGEVVRPG.

A YrdC-like domain is found at 4-185 (SFRVQQAARE…LATGEVVRPG (182 aa)).

It belongs to the SUA5 family. TsaC subfamily.

Its subcellular location is the cytoplasm. It catalyses the reaction L-threonine + hydrogencarbonate + ATP = L-threonylcarbamoyladenylate + diphosphate + H2O. Required for the formation of a threonylcarbamoyl group on adenosine at position 37 (t(6)A37) in tRNAs that read codons beginning with adenine. Catalyzes the conversion of L-threonine, HCO(3)(-)/CO(2) and ATP to give threonylcarbamoyl-AMP (TC-AMP) as the acyladenylate intermediate, with the release of diphosphate. The chain is Threonylcarbamoyl-AMP synthase from Pseudomonas putida (strain ATCC 700007 / DSM 6899 / JCM 31910 / BCRC 17059 / LMG 24140 / F1).